Consider the following 100-residue polypeptide: Large ribosomal subunit protein eL30 (100 aa).

Belongs to the eukaryotic ribosomal protein eL30 family.

This is Large ribosomal subunit protein eL30 from Thermococcus sibiricus (strain DSM 12597 / MM 739).